A 1038-amino-acid polypeptide reads, in one-letter code: DNA polymerase delta catalytic subunit (1038 aa).

Residues 1-29 (MSHSIPITSSPPPALKKLKLPNGSEEPSE) are disordered. Zn(2+) contacts are provided by Cys942, Cys945, Cys958, and Cys961. The CysA-type zinc-finger motif lies at 942 to 961 (CVSCRTPLKKDNLGALCPNC). The [4Fe-4S] cluster site is built by Cys992, Cys995, Cys1005, and Cys1010. The short motif at 992–1010 (CQRCQGSLHQEVLCSNKDC) is the CysB motif element.

Belongs to the DNA polymerase type-B family. In terms of assembly, heterodimer with subunits of 125 kDa and 50 kDa. The 125 kDa subunit contains the polymerase active site and most likely the active site for the 3'-5' exonuclease activity. Requires [4Fe-4S] cluster as cofactor.

It is found in the nucleus. It catalyses the reaction DNA(n) + a 2'-deoxyribonucleoside 5'-triphosphate = DNA(n+1) + diphosphate. Functionally, this polymerase possesses two enzymatic activities: DNA synthesis (polymerase) and an exonucleolytic activity that degrades single-stranded DNA in the 3'- to 5'-direction. The chain is DNA polymerase delta catalytic subunit (POL3) from Candida albicans (Yeast).